Here is a 160-residue protein sequence, read N- to C-terminus: Gene 34 protein (160 aa).

Residues 1 to 11 (MDSPRGISTAT) are compositionally biased toward polar residues. Residues 1 to 26 (MDSPRGISTATGDAHAEAAVSPAAEI) form a disordered region.

This chain is Gene 34 protein, found in Equus caballus (Horse).